Consider the following 191-residue polypeptide: Cdc42 homolog (191 aa).

10–17 contributes to the GTP binding site; that stretch reads GDGAVGKT. An Effector region motif is present at residues 32-40; sequence YVPTVFDNY. Residues 57 to 61 and 115 to 118 contribute to the GTP site; these read DTAGQ and TQID. Cys188 carries the post-translational modification Cysteine methyl ester. A lipid anchor (S-geranylgeranyl cysteine) is attached at Cys188. A propeptide spans 189 to 191 (removed in mature form); sequence KFL.

Belongs to the small GTPase superfamily. Rho family. CDC42 subfamily.

It localises to the cell junction. The protein resides in the adherens junction. Its subcellular location is the cell membrane. In terms of biological role, regulates mbt kinase activity and is also required to recruit mbt to adherens junctions. Together with mbt, regulates photoreceptor cell morphogenesis. This Aedes aegypti (Yellowfever mosquito) protein is Cdc42 homolog.